The sequence spans 1522 residues: Lysine-specific demethylase 5B (1522 aa).

The JmjN domain occupies 10 to 51 (CPVFEPSWEEFADPFAFIHKIRPIAEQTGICKVRPPPDWQPP). One can recognise an ARID domain in the interval 75 to 165 (TRVKLNFLDQ…ILYPYNLFQS (91 aa)). Residues 180-192 (DTKDKEYKPHDIP) show a composition bias toward basic and acidic residues. The tract at residues 180–229 (DTKDKEYKPHDIPQRQSVQPSESCPPARRAKRLRAEATNIKTESDSPEVR) is disordered. Residues 284-334 (LYVCLLCGSGNDEDRLLLCDGCDDSYHTFCLIPPLHDVPKGDWRCPQCLAQ) form a PHD-type 1 zinc finger. 2-oxoglutarate is bound at residue Y400. In terms of domain architecture, JmjC spans 428 to 594 (EYLDSGWNLN…LGRQCIEHYR (167 aa)). Positions 474 and 476 each coordinate Fe cation. S482, N484, and K492 together coordinate 2-oxoglutarate. H562 provides a ligand contact to Fe cation. A C5HC2 zinc finger spans residues 667 to 719 (CYKCKTTCFMSAVYCPCKPGLLVCLYHVEDLCSCPTYQYKLGYRYTLEELYPM). A PHD-type 2 zinc finger spans residues 1151–1199 (LKVCVCQKEPAAPMIQCELCRGFFHTGCVSVPHALQGPRVWLCPQCRRS). Residues 1353–1365 (LQAEQKPSVGPSN) are compositionally biased toward polar residues. Disordered regions lie at residues 1353–1373 (LQAE…CCRG) and 1400–1460 (ARVR…DSED). Residues 1400-1416 (ARVRKMRTPKKKKLKLS) show a composition bias toward basic residues. Over residues 1426–1442 (RMERERERLLEAQRSSE) the composition is skewed to basic and acidic residues. The segment at 1462–1516 (DAICPAVTCLQPEGEEVDWVQCDGSCNQWFHQVCVGISPEMAEKEDYICASCAGK) adopts a PHD-type 3 zinc-finger fold.

The protein belongs to the JARID1 histone demethylase family. Fe(2+) serves as cofactor.

It localises to the nucleus. The catalysed reaction is N(6),N(6),N(6)-trimethyl-L-lysyl(4)-[histone H3] + 3 2-oxoglutarate + 3 O2 = L-lysyl(4)-[histone H3] + 3 formaldehyde + 3 succinate + 3 CO2. Functionally, histone demethylase that demethylates 'Lys-4' of histone H3, thereby playing a central role in histone code. Does not demethylate histone H3 'Lys-9' or H3 'Lys-27'. Demethylates trimethylated, dimethylated and monomethylated H3 'Lys-4'. Acts as a transcriptional corepressor. May repress the CLOCK-BMAL1 heterodimer-mediated transcriptional activation of the core clock component PER2. This is Lysine-specific demethylase 5B (KDM5B) from Gallus gallus (Chicken).